Reading from the N-terminus, the 132-residue chain is Small ribosomal subunit protein uS8 (132 aa).

This sequence belongs to the universal ribosomal protein uS8 family. In terms of assembly, part of the 30S ribosomal subunit. Contacts proteins S5 and S12.

Functionally, one of the primary rRNA binding proteins, it binds directly to 16S rRNA central domain where it helps coordinate assembly of the platform of the 30S subunit. This chain is Small ribosomal subunit protein uS8, found in Geotalea daltonii (strain DSM 22248 / JCM 15807 / FRC-32) (Geobacter daltonii).